The following is a 255-amino-acid chain: UDP-2,3-diacylglucosamine hydrolase (255 aa).

Mn(2+) contacts are provided by aspartate 8, histidine 10, aspartate 41, asparagine 79, and histidine 114. Position 79-80 (79-80 (NR)) interacts with substrate. The substrate site is built by aspartate 122, serine 160, asparagine 164, lysine 167, and histidine 195. Residues histidine 195 and histidine 197 each contribute to the Mn(2+) site.

The protein belongs to the LpxH family. It depends on Mn(2+) as a cofactor.

It localises to the cell inner membrane. It carries out the reaction UDP-2-N,3-O-bis[(3R)-3-hydroxytetradecanoyl]-alpha-D-glucosamine + H2O = 2-N,3-O-bis[(3R)-3-hydroxytetradecanoyl]-alpha-D-glucosaminyl 1-phosphate + UMP + 2 H(+). Its pathway is glycolipid biosynthesis; lipid IV(A) biosynthesis; lipid IV(A) from (3R)-3-hydroxytetradecanoyl-[acyl-carrier-protein] and UDP-N-acetyl-alpha-D-glucosamine: step 4/6. In terms of biological role, hydrolyzes the pyrophosphate bond of UDP-2,3-diacylglucosamine to yield 2,3-diacylglucosamine 1-phosphate (lipid X) and UMP by catalyzing the attack of water at the alpha-P atom. Involved in the biosynthesis of lipid A, a phosphorylated glycolipid that anchors the lipopolysaccharide to the outer membrane of the cell. This Hamiltonella defensa subsp. Acyrthosiphon pisum (strain 5AT) protein is UDP-2,3-diacylglucosamine hydrolase.